A 433-amino-acid polypeptide reads, in one-letter code: B3 domain-containing protein Os04g0676600 (433 aa).

2 disordered regions span residues 1 to 29 (MADT…GGGQ) and 216 to 283 (FPPV…NSAN). Residues 13-24 (GDDRGREGHDDF) show a composition bias toward basic and acidic residues. Low complexity predominate over residues 216 to 229 (FPPVSSSSRSFSSA). Positions 237 to 265 (DAKKAKKSDIKDQPIVLRRSDTESEKNDE) are enriched in basic and acidic residues. Positions 269-283 (TPASEPSSMSHNSAN) are enriched in polar residues. Residues 297-399 (LRKELTNSDV…KLVVRGEKAI (103 aa)) constitute a DNA-binding region (TF-B3).

The protein resides in the nucleus. Probable transcription regulator that binds specifically to the DNA sequence 5'-CATGC-3' of the IDE1 element found in the promoter of the barley iron deficiency-inducible gene IDS2. The chain is B3 domain-containing protein Os04g0676600 from Oryza sativa subsp. japonica (Rice).